Here is a 300-residue protein sequence, read N- to C-terminus: Putative S-adenosyl-L-methionine-dependent methyltransferase MAB_4328c (300 aa).

S-adenosyl-L-methionine is bound by residues Asp126 and 155–156 (DL).

This sequence belongs to the UPF0677 family.

Exhibits S-adenosyl-L-methionine-dependent methyltransferase activity. This Mycobacteroides abscessus (strain ATCC 19977 / DSM 44196 / CCUG 20993 / CIP 104536 / JCM 13569 / NCTC 13031 / TMC 1543 / L948) (Mycobacterium abscessus) protein is Putative S-adenosyl-L-methionine-dependent methyltransferase MAB_4328c.